Here is a 330-residue protein sequence, read N- to C-terminus: Ketol-acid reductoisomerase (NADP(+)) (330 aa).

The region spanning 2-182 is the KARI N-terminal Rossmann domain; the sequence is VETFYEKDAD…GCTRAGVIKT (181 aa). NADP(+) contacts are provided by residues 25–28, Lys-48, Ser-51, Ser-53, and 83–86; these read YGSQ and DEVQ. Residue His-108 is part of the active site. Gly-134 is an NADP(+) binding site. The KARI C-terminal knotted domain maps to 183–328; sequence TFKEETETDL…EKLRAMMPWI (146 aa). 4 residues coordinate Mg(2+): Asp-191, Glu-195, Glu-227, and Glu-231. Ser-252 provides a ligand contact to substrate.

The protein belongs to the ketol-acid reductoisomerase family. Mg(2+) is required as a cofactor.

The enzyme catalyses (2R)-2,3-dihydroxy-3-methylbutanoate + NADP(+) = (2S)-2-acetolactate + NADPH + H(+). The catalysed reaction is (2R,3R)-2,3-dihydroxy-3-methylpentanoate + NADP(+) = (S)-2-ethyl-2-hydroxy-3-oxobutanoate + NADPH + H(+). The protein operates within amino-acid biosynthesis; L-isoleucine biosynthesis; L-isoleucine from 2-oxobutanoate: step 2/4. It participates in amino-acid biosynthesis; L-valine biosynthesis; L-valine from pyruvate: step 2/4. Its function is as follows. Involved in the biosynthesis of branched-chain amino acids (BCAA). Catalyzes an alkyl-migration followed by a ketol-acid reduction of (S)-2-acetolactate (S2AL) to yield (R)-2,3-dihydroxy-isovalerate. In the isomerase reaction, S2AL is rearranged via a Mg-dependent methyl migration to produce 3-hydroxy-3-methyl-2-ketobutyrate (HMKB). In the reductase reaction, this 2-ketoacid undergoes a metal-dependent reduction by NADPH to yield (R)-2,3-dihydroxy-isovalerate. In Petrotoga mobilis (strain DSM 10674 / SJ95), this protein is Ketol-acid reductoisomerase (NADP(+)).